The chain runs to 256 residues: Thiazole synthase (256 aa).

The active-site Schiff-base intermediate with DXP is the Lys-95. Residues Gly-156, 182–183 (AG), and 204–205 (NT) contribute to the 1-deoxy-D-xylulose 5-phosphate site.

Belongs to the ThiG family. As to quaternary structure, homotetramer. Forms heterodimers with either ThiH or ThiS.

The protein localises to the cytoplasm. It catalyses the reaction [ThiS sulfur-carrier protein]-C-terminal-Gly-aminoethanethioate + 2-iminoacetate + 1-deoxy-D-xylulose 5-phosphate = [ThiS sulfur-carrier protein]-C-terminal Gly-Gly + 2-[(2R,5Z)-2-carboxy-4-methylthiazol-5(2H)-ylidene]ethyl phosphate + 2 H2O + H(+). It participates in cofactor biosynthesis; thiamine diphosphate biosynthesis. Functionally, catalyzes the rearrangement of 1-deoxy-D-xylulose 5-phosphate (DXP) to produce the thiazole phosphate moiety of thiamine. Sulfur is provided by the thiocarboxylate moiety of the carrier protein ThiS. In vitro, sulfur can be provided by H(2)S. In Cronobacter sakazakii (strain ATCC BAA-894) (Enterobacter sakazakii), this protein is Thiazole synthase.